The sequence spans 156 residues: Insulin (156 aa).

The signal sequence occupies residues 1–31; sequence MSKFLLQSHSANACLLTLLLTLASNLDISLA. Disulfide bonds link cysteine 37-cysteine 114, cysteine 49-cysteine 119, cysteine 61-cysteine 128, and cysteine 112-cysteine 115. The propeptide at 79–93 is c peptide beta; the sequence is DTENVNDKLRGILLN. Residues 96–102 constitute a propeptide, c peptide alpha; sequence EAFSYLT. Positions 141-156 are cleaved as a propeptide — d peptide; the sequence is TGRSNSGHAQLEDNFS. A propeptide spans 144–156 (d peptide short form); it reads SNSGHAQLEDNFS. Residue glutamate 152 is modified to 4-carboxyglutamate.

Belongs to the insulin family. Heterodimer of a B chain or a B chain' and an A chain probably linked by three disulfide bonds. As to expression, expressed in the central region of the cerebral ganglia mostly within the F and C clusters.

The protein resides in the secreted. In terms of biological role, involved in glucose metabolism. This Aplysia californica (California sea hare) protein is Insulin (PIN).